Reading from the N-terminus, the 46-residue chain is Esculentin-1GRa (46 aa).

As to expression, expressed by the skin glands.

The protein localises to the secreted. Functionally, antimicrobial peptide active against the Gram-positive bacterium S.aureus (MIC=12.5 uM) and against the Gram-negative bacterium E.coli (MIC=6 uM). Has no antifungal activity against C.albicans. Shows hemolytic activity against human erythrocytes only at high concentrations (LC(50)=210 uM). This chain is Esculentin-1GRa, found in Odorrana grahami (Yunnanfu frog).